The primary structure comprises 755 residues: Photosystem I P700 chlorophyll a apoprotein A1 (755 aa).

8 helical membrane-spanning segments follow: residues 72 to 95, 158 to 181, 197 to 221, 297 to 315, 352 to 375, 391 to 417, 439 to 461, and 536 to 554; these read IFSAHFGHLAVVFVWLSGMYYHGA, LLCTAIGGLVMAGLCLFAGWFHYH, LNHHLAGLLGLGSLAWAGHQIHVAI, QAHHHLAIAVLFIVAGHMY, WHAQLAINLAMVGSLSIIVAQHMY, ISLFTHHMWIGGFFVVGGAAHGAIYMV, AIISHLNWVCLFLGFHAFGFYVH, and FMVHHIHAMTIHITVLILL. [4Fe-4S] cluster-binding residues include Cys-578 and Cys-587. 2 helical membrane-spanning segments follow: residues 594–615 and 669–691; these read HVFLGLFWMYNCISIVIFHFSW and LSAYGLLFLGAHFVWAFSLMFLF. His-680 contributes to the chlorophyll a' binding site. Chlorophyll a-binding residues include Met-688 and Tyr-696. Position 697 (Trp-697) interacts with phylloquinone. The helical transmembrane segment at 729 to 749 threads the bilayer; it reads AVGVAHYLLGGIVTTWAFFLA.

This sequence belongs to the PsaA/PsaB family. In terms of assembly, the PsaA/B heterodimer binds the P700 chlorophyll special pair and subsequent electron acceptors. PSI consists of a core antenna complex that captures photons, and an electron transfer chain that converts photonic excitation into a charge separation. The cyanobacterial PSI reaction center is composed of one copy each of PsaA,B,C,D,E,F,I,J,K,L,M and X, and forms trimeric complexes. It depends on PSI electron transfer chain: 5 chlorophyll a, 1 chlorophyll a', 2 phylloquinones and 3 4Fe-4S clusters. PSI core antenna: 90 chlorophyll a, 22 carotenoids, 3 phospholipids and 1 galactolipid. P700 is a chlorophyll a/chlorophyll a' dimer, A0 is one or more chlorophyll a, A1 is one or both phylloquinones and FX is a shared 4Fe-4S iron-sulfur center. as a cofactor.

It localises to the cellular thylakoid membrane. It catalyses the reaction reduced [plastocyanin] + hnu + oxidized [2Fe-2S]-[ferredoxin] = oxidized [plastocyanin] + reduced [2Fe-2S]-[ferredoxin]. Its function is as follows. PsaA and PsaB bind P700, the primary electron donor of photosystem I (PSI), as well as the electron acceptors A0, A1 and FX. PSI is a plastocyanin/cytochrome c6-ferredoxin oxidoreductase, converting photonic excitation into a charge separation, which transfers an electron from the donor P700 chlorophyll pair to the spectroscopically characterized acceptors A0, A1, FX, FA and FB in turn. Oxidized P700 is reduced on the lumenal side of the thylakoid membrane by plastocyanin or cytochrome c6. The protein is Photosystem I P700 chlorophyll a apoprotein A1 of Synechococcus sp. (strain JA-2-3B'a(2-13)) (Cyanobacteria bacterium Yellowstone B-Prime).